Reading from the N-terminus, the 213-residue chain is MPTVLLTGFEPFDGDTSNPSWTAVQEVRDRWDGDAEIQVRQLPVDFAKVDDALRAALAEVDPDVVISVGLAGGIETLEVERVAINVDDARIPDNTGFQPIDEPVVDGGPAAYFSTLPIKAAVAAVRTKGIPAVVSQTAGTYTCNHVFYLLMHELRDRPGTRGGFVHIPYSTEEAIGTDRPYMRMDQLATALTAVVRATLANATDVKVGSGSLD.

Residues E80, C143, and H166 contribute to the active site.

The protein belongs to the peptidase C15 family. Homotetramer.

Its subcellular location is the cytoplasm. It catalyses the reaction Release of an N-terminal pyroglutamyl group from a polypeptide, the second amino acid generally not being Pro.. Functionally, removes 5-oxoproline from various penultimate amino acid residues except L-proline. This Clavibacter michiganensis subsp. michiganensis (strain NCPPB 382) protein is Pyrrolidone-carboxylate peptidase.